Here is a 225-residue protein sequence, read N- to C-terminus: tRNA (guanine-N(1)-)-methyltransferase (225 aa).

Residues Gly112 and Ile132–Leu137 contribute to the S-adenosyl-L-methionine site.

The protein belongs to the RNA methyltransferase TrmD family. Homodimer.

The protein resides in the cytoplasm. The catalysed reaction is guanosine(37) in tRNA + S-adenosyl-L-methionine = N(1)-methylguanosine(37) in tRNA + S-adenosyl-L-homocysteine + H(+). In terms of biological role, specifically methylates guanosine-37 in various tRNAs. The chain is tRNA (guanine-N(1)-)-methyltransferase from Bacteroides thetaiotaomicron (strain ATCC 29148 / DSM 2079 / JCM 5827 / CCUG 10774 / NCTC 10582 / VPI-5482 / E50).